The sequence spans 445 residues: Tubulin beta-3 chain (445 aa).

Positions 1 to 4 (MREI) match the MREI motif motif. GTP-binding residues include glutamine 11, glutamate 69, serine 138, glycine 142, threonine 143, glycine 144, asparagine 204, and asparagine 226. Residue glutamate 69 coordinates Mg(2+). The interval 425–445 (YQDATAEEEGEFEEEAEEEAE) is disordered. Over residues 429 to 445 (TAEEEGEFEEEAEEEAE) the composition is skewed to acidic residues. Glutamate 438 is subject to 5-glutamyl polyglutamate.

Belongs to the tubulin family. As to quaternary structure, dimer of alpha and beta chains. A typical microtubule is a hollow water-filled tube with an outer diameter of 25 nm and an inner diameter of 15 nM. Alpha-beta heterodimers associate head-to-tail to form protofilaments running lengthwise along the microtubule wall with the beta-tubulin subunit facing the microtubule plus end conferring a structural polarity. Microtubules usually have 13 protofilaments but different protofilament numbers can be found in some organisms and specialized cells. Mg(2+) serves as cofactor. In terms of processing, some glutamate residues at the C-terminus are polyglycylated, resulting in polyglycine chains on the gamma-carboxyl group. Glycylation is mainly limited to tubulin incorporated into axonemes (cilia and flagella) whereas glutamylation is prevalent in neuronal cells, centrioles, axonemes, and the mitotic spindle. Both modifications can coexist on the same protein on adjacent residues, and lowering polyglycylation levels increases polyglutamylation, and reciprocally. The precise function of polyglycylation is still unclear. Post-translationally, some glutamate residues at the C-terminus are polyglutamylated, resulting in polyglutamate chains on the gamma-carboxyl group. Polyglutamylation plays a key role in microtubule severing by spastin (SPAST). SPAST preferentially recognizes and acts on microtubules decorated with short polyglutamate tails: severing activity by SPAST increases as the number of glutamates per tubulin rises from one to eight, but decreases beyond this glutamylation threshold. Highly expressed in testis.

It localises to the cytoplasm. Its subcellular location is the cytoskeleton. Its function is as follows. Tubulin is the major constituent of microtubules, a cylinder consisting of laterally associated linear protofilaments composed of alpha- and beta-tubulin heterodimers. Microtubules grow by the addition of GTP-tubulin dimers to the microtubule end, where a stabilizing cap forms. Below the cap, tubulin dimers are in GDP-bound state, owing to GTPase activity of alpha-tubulin. TUBB3 plays a role in dorsal root ganglion axon projection towards the spinal cord. The polypeptide is Tubulin beta-3 chain (Gallus gallus (Chicken)).